We begin with the raw amino-acid sequence, 466 residues long: Cysteine--tRNA ligase (466 aa).

Cys-29 contributes to the Zn(2+) binding site. The 'HIGH' region motif lies at 31-41 (PTVYDFAHIGN). Cys-210, His-235, and Glu-239 together coordinate Zn(2+). The short motif at 267–271 (KMSKS) is the 'KMSKS' region element. Lys-270 serves as a coordination point for ATP.

It belongs to the class-I aminoacyl-tRNA synthetase family. In terms of assembly, monomer. Zn(2+) is required as a cofactor.

The protein localises to the cytoplasm. It carries out the reaction tRNA(Cys) + L-cysteine + ATP = L-cysteinyl-tRNA(Cys) + AMP + diphosphate. This chain is Cysteine--tRNA ligase, found in Solibacter usitatus (strain Ellin6076).